A 380-amino-acid polypeptide reads, in one-letter code: tRNA-specific 2-thiouridylase MnmA (380 aa).

ATP-binding positions include 12–19 (GLSGGVDS) and Met38. Residues 108 to 110 (NPD) are interaction with target base in tRNA. Catalysis depends on Cys113, which acts as the Nucleophile. Residues Cys113 and Cys210 are joined by a disulfide bond. Gly138 provides a ligand contact to ATP. The tract at residues 160-162 (KDQ) is interaction with tRNA. The active-site Cysteine persulfide intermediate is the Cys210.

This sequence belongs to the MnmA/TRMU family.

It localises to the cytoplasm. It carries out the reaction S-sulfanyl-L-cysteinyl-[protein] + uridine(34) in tRNA + AH2 + ATP = 2-thiouridine(34) in tRNA + L-cysteinyl-[protein] + A + AMP + diphosphate + H(+). Functionally, catalyzes the 2-thiolation of uridine at the wobble position (U34) of tRNA, leading to the formation of s(2)U34. The protein is tRNA-specific 2-thiouridylase MnmA of Ureaplasma urealyticum serovar 10 (strain ATCC 33699 / Western).